We begin with the raw amino-acid sequence, 451 residues long: Cyclin-dependent kinase 18 (451 aa).

A phosphoserine mark is found at serine 12, serine 51, serine 66, serine 75, and serine 109. In terms of domain architecture, Protein kinase spans 121–402; it reads YVKLDKLGEG…AEAALNHPYF (282 aa). ATP-binding positions include 127-135 and lysine 150; that span reads LGEGTYATV. The Proton acceptor role is filled by aspartate 242. 2 positions are modified to phosphoserine: serine 417 and serine 420.

The protein belongs to the protein kinase superfamily. CMGC Ser/Thr protein kinase family. CDC2/CDKX subfamily. In brain, kidney, intestine and at a much lower level, in fetal tissues.

It carries out the reaction L-seryl-[protein] + ATP = O-phospho-L-seryl-[protein] + ADP + H(+). The catalysed reaction is L-threonyl-[protein] + ATP = O-phospho-L-threonyl-[protein] + ADP + H(+). Functionally, may play a role in signal transduction cascades in terminally differentiated cells. The chain is Cyclin-dependent kinase 18 (Cdk18) from Mus musculus (Mouse).